The following is a 451-amino-acid chain: G-protein coupled receptor 61 (451 aa).

Positions 1-14 are enriched in low complexity; that stretch reads MESSPIPQSSGNSS. A disordered region spans residues 1–31; the sequence is MESSPIPQSSGNSSTLGRVPQTPGPSTASGV. Residues 1–44 are Extracellular-facing; it reads MESSPIPQSSGNSSTLGRVPQTPGPSTASGVPEVGLRDVASESV. N-linked (GlcNAc...) asparagine glycosylation is present at asparagine 12. Residues 45–67 form a helical membrane-spanning segment; it reads ALFFMLLLDLTAVAGNAAVMAVI. At 68–75 the chain is on the cytoplasmic side; that stretch reads AKTPALRK. A helical membrane pass occupies residues 76-98; it reads FVFVFHLCLVDLLAALTLMPLAM. The Extracellular portion of the chain corresponds to 99 to 112; the sequence is LSSSALFDHALFGE. A helical membrane pass occupies residues 113–135; sequence VACRLYLFLSVCFVSLAILSVSA. Residues 136 to 155 lie on the Cytoplasmic side of the membrane; sequence INVERYYYVVHPMRYEVRMT. Residues 156-178 traverse the membrane as a helical segment; the sequence is LGLVASVLVGVWVKALAMASVPV. Residues 179 to 206 are Extracellular-facing; that stretch reads LGRVSWEEGAPSVPPGCSLQWSHSAYCQ. A helical membrane pass occupies residues 207 to 229; the sequence is LFVVVFAVLYFLLPLLLILVVYC. Residues 230–287 lie on the Cytoplasmic side of the membrane; that stretch reads SMFRVARVAAMQHGPLPTWMETPRQRSESLSSRSTMVTSSGAPQTTPHRTFGGGKAAV. A helical transmembrane segment spans residues 288–310; sequence VLLAVGGQFLLCWLPYFSFHLYV. Residues 311-324 lie on the Extracellular side of the membrane; the sequence is ALSAQPISTGQVES. A helical membrane pass occupies residues 325–344; it reads VVTWIGYFCFTSNPFFYGCL. At 345-451 the chain is on the cytoplasmic side; it reads NRQIRGELSK…RPAASPRLES (107 aa).

The protein belongs to the G-protein coupled receptor 1 family. Forms heterodimer with MTNR1B. Interacts with ARRB1 and ARRB2 in a spontaneous and agonist-independent manner; leading to the internalization of GPR61 in the endosomal compartment. As to expression, expressed in brain; detected in frontal and temporal lobes, occipital pole, amygdala and hippocampus. Also expressed in testis and T cells, B cells, and monocyte. Low expression in many other tissues. Widely expressed in the hippocampus (at protein level).

It localises to the cell membrane. The protein resides in the endosome membrane. Orphan G-protein coupled receptor. Constitutively activates the G(s)-alpha/cAMP signaling pathway. Shows a reciprocal regulatory interaction with the melatonin receptor MTNR1B most likely through receptor heteromerization. May be involved in the regulation of food intake and body weight. The chain is G-protein coupled receptor 61 (GPR61) from Homo sapiens (Human).